The following is a 303-amino-acid chain: Enoyl-CoA hydratase domain-containing protein 3, mitochondrial (303 aa).

The N-terminal 17 residues, 1–17 (MAAVAVLRAFGASGPMC), are a transit peptide targeting the mitochondrion. The residue at position 110 (Lys-110) is an N6-succinyllysine.

Belongs to the enoyl-CoA hydratase/isomerase family. In terms of tissue distribution, expressed in adipocytes. Expressed in blood cells, with higher expression in patients with low coronary lesions.

The protein resides in the mitochondrion. Functionally, may play a role in fatty acid biosynthesis and insulin sensitivity. This chain is Enoyl-CoA hydratase domain-containing protein 3, mitochondrial, found in Homo sapiens (Human).